The sequence spans 352 residues: Phosphoribosylformylglycinamidine cyclo-ligase (352 aa).

This sequence belongs to the AIR synthase family.

The protein localises to the cytoplasm. It carries out the reaction 2-formamido-N(1)-(5-O-phospho-beta-D-ribosyl)acetamidine + ATP = 5-amino-1-(5-phospho-beta-D-ribosyl)imidazole + ADP + phosphate + H(+). Its pathway is purine metabolism; IMP biosynthesis via de novo pathway; 5-amino-1-(5-phospho-D-ribosyl)imidazole from N(2)-formyl-N(1)-(5-phospho-D-ribosyl)glycinamide: step 2/2. The chain is Phosphoribosylformylglycinamidine cyclo-ligase from Coxiella burnetii (strain RSA 331 / Henzerling II).